The following is an 81-amino-acid chain: Protein Vpu (81 aa).

At 1–7 the chain is on the extracellular side; the sequence is MSILQIV. A helical transmembrane segment spans residues 8-28; the sequence is AIVAIIVALILAIVVWTIVYI. Over 29 to 81 the chain is Cytoplasmic; it reads EYKRLLRQRKIDWLIDRIRERAEDSGNESEGDTEELSTLVEMEPDNFRNDNDM. The tract at residues 50–81 is disordered; it reads AEDSGNESEGDTEELSTLVEMEPDNFRNDNDM. Phosphoserine; by host CK2 occurs at positions 53 and 57. The segment covering 53–63 has biased composition (acidic residues); it reads SGNESEGDTEE.

It belongs to the HIV-1 VPU protein family. In terms of assembly, homopentamer. Interacts with host CD4 and BRTC; these interactions induce proteasomal degradation of CD4. Interacts with host BST2; this interaction leads to the degradation of host BST2. Interacts with host FBXW11. Interacts with host AP1M1; this interaction plays a role in the mistrafficking and subsequent degradation of host BST2. Interacts with host RANBP2; this interaction allows Vpu to down-regulate host BLM sumoylation. Phosphorylated by host CK2. This phosphorylation is necessary for interaction with human BTRC and degradation of CD4.

The protein localises to the host membrane. With respect to regulation, ion channel activity is inhibited by hexamethylene amiloride in vitro. Enhances virion budding by targeting host CD4 and Tetherin/BST2 to proteasome degradation. Degradation of CD4 prevents any unwanted premature interactions between viral Env and its host receptor CD4 in the endoplasmic reticulum. Degradation of antiretroviral protein Tetherin/BST2 is important for virion budding, as BST2 tethers new viral particles to the host cell membrane. Mechanistically, Vpu bridges either CD4 or BST2 to BTRC, a substrate recognition subunit of the Skp1/Cullin/F-box protein E3 ubiquitin ligase, induces their ubiquitination and subsequent proteasomal degradation. The alteration of the E3 ligase specificity by Vpu seems to promote the degradation of host IKBKB, leading to NF-kappa-B down-regulation and subsequent apoptosis. Acts as a viroporin that forms an oligomeric ion channel in membranes. Modulates the host DNA repair mechanisms to promote degradation of nuclear viral cDNA in cells that are already productively infected in order to suppress immune sensing and proviral hyper-integration (superinfection). Manipulates PML-NBs and modulates SUMOylation of host BLM protein thereby enhancing its DNA-end processing activity toward viral unintegrated linear DNA. Also inhibits RAD52-mediated homologous repair of viral cDNA, preventing the generation of dead-end circular forms of single copies of the long terminal repeat and permitting sustained nucleolytic attack. This chain is Protein Vpu, found in Human immunodeficiency virus type 1 (HIV-1).